We begin with the raw amino-acid sequence, 486 residues long: MSVTYDDSVGVEVSSDSFWEVGNYKRTVKRIDDGHRLCGDLMNCLHERARIEKAYAQQLTEWARRWRQLVEKGPQYGTVEKAWIAVMSEAERVSELHLEVKASLMNEDFEKIKNWQKEAFHKQMMGGFKETKEAEDGFRKAQKPWAKKLKEVEAAKKAHHTACKEEKLAISREANSKADPSLNPEQLKKLQDKIEKCKQDVLKTKDKYEKSLKELDQTTPQYMENMEQVFEQCQQFEEKRLRFFREVLLEVQKHLDLSNVASYKTIYRELEQSIKAADAVEDLRWFRANHGPGMAMNWPQFEEWSADLNRTLSRREKKKAVDGVTLTGINQTGDQSGQNKPGSNLSVPSNPAQSTQLQSSYNPFEDEDDTGSSISEKEDIKAKNVSSYEKTQTYPTDWSDDESNNPFSSTDANGDSNPFDEDTTSGTEVRVRALYDYEGQEHDELSFKAGDELTKIEDEDEQGWCKGRLDSGQVGLYPANYVEAIQ.

The F-BAR domain occupies 11–282 (VEVSSDSFWE…SIKAADAVED (272 aa)). A coiled-coil region spans residues 25 to 274 (KRTVKRIDDG…TIYRELEQSI (250 aa)). N6-acetyllysine is present on K53. A Phosphoserine modification is found at S273. S313 is subject to Phosphoserine; by PKC. The segment at 315–426 (REKKKAVDGV…NPFDEDTTSG (112 aa)) is disordered. Residues 327 to 362 (TGINQTGDQSGQNKPGSNLSVPSNPAQSTQLQSSYN) show a composition bias toward polar residues. The NPF1 signature appears at 362-364 (NPF). S373 is subject to Phosphoserine; by IKKB. Over residues 384 to 396 (NVSSYEKTQTYPT) the composition is skewed to polar residues. A Phosphoserine modification is found at S399. A compositionally biased stretch (polar residues) spans 404-416 (NNPFSSTDANGDS). An NPF2 motif is present at residues 405 to 407 (NPF). An NPF3 motif is present at residues 417–419 (NPF). The SH3 domain occupies 426–486 (GTEVRVRALY…YPANYVEAIQ (61 aa)). S446 bears the Phosphoserine mark.

This sequence belongs to the PACSIN family. Homodimer. May form heterooligomers with other PACSINs. Interacts (via NPF motifs) with EHD1 (via EH domain). Interacts (via NPF motifs) with EHD2 (via EH domain); this interaction probably stabilizes the caveolae. Interacts with EHD3. Interacts (via the SH3 domain) with MICALL1. Interacts with RAC1. Interacts (via SH3 domain) with DNM1, SYN1, SYNJ1 and WASL. Interacts (via F-BAR domain) with CAV1; this interaction induces membrane tubulation. Interacts with TRPV4. Forms a complex with EHD4 and MICALL1; the complex controls CDH5 trafficking and coordinates angiogenesis. Phosphorylated by casein kinase 2 (CK2). Phosphorylation by PKC probably decreases the membrane binding and tubulation capacities of PACSIN2, thereby modulating the lifetime of caveolae. In terms of tissue distribution, widely expressed (at protein level).

Its subcellular location is the cytoplasm. The protein localises to the cytoskeleton. The protein resides in the cytoplasmic vesicle membrane. It is found in the cell projection. It localises to the ruffle membrane. Its subcellular location is the early endosome. The protein localises to the recycling endosome membrane. The protein resides in the cell membrane. It is found in the membrane. It localises to the caveola. Its subcellular location is the cell junction. The protein localises to the adherens junction. In terms of biological role, regulates the morphogenesis and endocytosis of caveolae. Lipid-binding protein that is able to promote the tubulation of the phosphatidic acid-containing membranes it preferentially binds. Plays a role in intracellular vesicle-mediated transport. Involved in the endocytosis of cell-surface receptors like the EGF receptor, contributing to its internalization in the absence of EGF stimulus. Essential for endothelial organization in sprouting angiogenesis, modulates CDH5-based junctions. Facilitates endothelial front-rear polarity during migration by recruiting EHD4 and MICALL1 to asymmetric adherens junctions between leader and follower cells. The polypeptide is Protein kinase C and casein kinase substrate in neurons protein 2 (Pacsin2) (Mus musculus (Mouse)).